The chain runs to 130 residues: Small ribosomal subunit protein uS8 (130 aa).

This sequence belongs to the universal ribosomal protein uS8 family. As to quaternary structure, part of the 30S ribosomal subunit. Contacts proteins S5 and S12.

Functionally, one of the primary rRNA binding proteins, it binds directly to 16S rRNA central domain where it helps coordinate assembly of the platform of the 30S subunit. This chain is Small ribosomal subunit protein uS8, found in Chromohalobacter salexigens (strain ATCC BAA-138 / DSM 3043 / CIP 106854 / NCIMB 13768 / 1H11).